We begin with the raw amino-acid sequence, 239 residues long: Probable transcriptional regulatory protein lmo0369 (239 aa).

Belongs to the TACO1 family. YeeN subfamily.

It is found in the cytoplasm. The chain is Probable transcriptional regulatory protein lmo0369 from Listeria monocytogenes serovar 1/2a (strain ATCC BAA-679 / EGD-e).